The sequence spans 178 residues: ATP-dependent protease subunit HslV (178 aa).

Thr7 is a catalytic residue. Residues Gly162, Cys165, and Thr168 each coordinate Na(+).

Belongs to the peptidase T1B family. HslV subfamily. In terms of assembly, a double ring-shaped homohexamer of HslV is capped on each side by a ring-shaped HslU homohexamer. The assembly of the HslU/HslV complex is dependent on binding of ATP.

The protein localises to the cytoplasm. The enzyme catalyses ATP-dependent cleavage of peptide bonds with broad specificity.. Allosterically activated by HslU binding. In terms of biological role, protease subunit of a proteasome-like degradation complex believed to be a general protein degrading machinery. This is ATP-dependent protease subunit HslV from Burkholderia lata (strain ATCC 17760 / DSM 23089 / LMG 22485 / NCIMB 9086 / R18194 / 383).